The chain runs to 754 residues: Catalase-peroxidase (754 aa).

The interval 1 to 29 is disordered; it reads MGTQPARKLRNRVFPHPHNHRKEKPMAND. Residues 7 to 23 are compositionally biased toward basic residues; the sequence is RKLRNRVFPHPHNHRKE. Trp106 functions as the Tryptophan radical intermediate in the catalytic mechanism. Residues 122–249 constitute a cross-link (tryptophyl-tyrosyl-methioninium (Trp-Tyr) (with M-275)); it reads WHAAGTYRIA…LAAVQMGLIY (128 aa). His123 serves as the catalytic Proton acceptor. Positions 249–275 form a cross-link, tryptophyl-tyrosyl-methioninium (Tyr-Met) (with W-122); that stretch reads YVNPEGVDGHPDPLCTAQDVRTTFARM. His290 lines the heme b pocket.

It belongs to the peroxidase family. Peroxidase/catalase subfamily. In terms of assembly, homodimer. Heme b serves as cofactor. Formation of the three residue Trp-Tyr-Met cross-link is important for the catalase, but not the peroxidase activity of the enzyme.

The catalysed reaction is H2O2 + AH2 = A + 2 H2O. The enzyme catalyses 2 H2O2 = O2 + 2 H2O. Functionally, bifunctional enzyme with both catalase and broad-spectrum peroxidase activity. Also displays NADH oxidase, isoniazid hydrazine lyase and isonicotinoyl-NAD synthase activities. This chain is Catalase-peroxidase, found in Synechocystis sp. (strain ATCC 27184 / PCC 6803 / Kazusa).